The following is a 187-amino-acid chain: Large ribosomal subunit protein uL5 (187 aa).

This sequence belongs to the universal ribosomal protein uL5 family. Part of the 50S ribosomal subunit; part of the 5S rRNA/L5/L18/L25 subcomplex. Contacts the 5S rRNA and the P site tRNA. Forms a bridge to the 30S subunit in the 70S ribosome.

Its function is as follows. This is one of the proteins that bind and probably mediate the attachment of the 5S RNA into the large ribosomal subunit, where it forms part of the central protuberance. In the 70S ribosome it contacts protein S13 of the 30S subunit (bridge B1b), connecting the 2 subunits; this bridge is implicated in subunit movement. Contacts the P site tRNA; the 5S rRNA and some of its associated proteins might help stabilize positioning of ribosome-bound tRNAs. The polypeptide is Large ribosomal subunit protein uL5 (Mycobacterium sp. (strain JLS)).